A 435-amino-acid polypeptide reads, in one-letter code: Protein phosphatase 2C homolog 2 (435 aa).

The PPM-type phosphatase domain maps to 23 to 298 (IYGVSAMQGW…DNMTMIIIGL (276 aa)). Aspartate 71, glycine 72, aspartate 240, and aspartate 289 together coordinate Mn(2+). Positions 366–435 (DQTEEDRDLP…TSGAPEKSTS (70 aa)) are disordered. The span at 381 to 392 (ELPDSARNEREG) shows a compositional bias: basic and acidic residues. A compositionally biased stretch (low complexity) spans 409-418 (GSSASTSEST). A compositionally biased stretch (polar residues) spans 419 to 435 (VTPAGSSTSGAPEKSTS).

The protein belongs to the PP2C family. The cofactor is Mg(2+). It depends on Mn(2+) as a cofactor.

It localises to the cytoplasm. It is found in the nucleus. The catalysed reaction is O-phospho-L-seryl-[protein] + H2O = L-seryl-[protein] + phosphate. It carries out the reaction O-phospho-L-threonyl-[protein] + H2O = L-threonyl-[protein] + phosphate. Dephosphorylating regulator for many key proteins. Dephosphorylates phosphoglycerate kinase pgk1 at least on 'Ser-203' to negatively regulate targeting of pgk1 to the mitochondrion, thereby negatively regulating production of acetyl-CoA and consequently aflatoxin biosynthesis. This Aspergillus flavus (strain ATCC 200026 / FGSC A1120 / IAM 13836 / NRRL 3357 / JCM 12722 / SRRC 167) protein is Protein phosphatase 2C homolog 2.